We begin with the raw amino-acid sequence, 225 residues long: MENQPKLNSSKEVIAFLAERFPQCFSAEGEARPLKIGIFQDLVERVGGEMNLSKTQLRAALRLYTSSWRYLYGVKAGAIRVDLDGNPCGELEEQHIAHARQQLEEAKARVQTQRAAQQAKKREAAAAAGQQDEGVRRERKPRPQQPRRKEGAEQRKPRPVAAKAPREERHTPVSDVSVLTVGQALKVKAGNNAMDATVLEITKDGVRVQLTSGMSMIVRAEHLVF.

Positions 103–173 (LEEAKARVQT…APREERHTPV (71 aa)) are disordered. Residues 109-118 (RVQTQRAAQQ) are compositionally biased toward low complexity. Residues 137 to 146 (RERKPRPQQP) are compositionally biased toward basic residues. A compositionally biased stretch (basic and acidic residues) spans 147–156 (RRKEGAEQRK).

It belongs to the ProQ family.

It localises to the cytoplasm. In terms of biological role, RNA chaperone with significant RNA binding, RNA strand exchange and RNA duplexing activities. May regulate ProP activity through an RNA-based, post-transcriptional mechanism. This chain is RNA chaperone ProQ, found in Klebsiella pneumoniae (strain 342).